Here is a 118-residue protein sequence, read N- to C-terminus: MARIAGINIPEHKHAVIAIQAIYGVGPTRAKSICAGAGVAENTKIKELDEATIDKLRDEVAKFTVEGDLRREVSMSIKRLMDLGCFRGIRHRRSLPLRGQRTKTNARTRKGPRKPIKK.

Residues 94-118 form a disordered region; the sequence is SLPLRGQRTKTNARTRKGPRKPIKK.

Belongs to the universal ribosomal protein uS13 family. As to quaternary structure, part of the 30S ribosomal subunit. Forms a loose heterodimer with protein S19. Forms two bridges to the 50S subunit in the 70S ribosome.

Its function is as follows. Located at the top of the head of the 30S subunit, it contacts several helices of the 16S rRNA. In the 70S ribosome it contacts the 23S rRNA (bridge B1a) and protein L5 of the 50S subunit (bridge B1b), connecting the 2 subunits; these bridges are implicated in subunit movement. Contacts the tRNAs in the A and P-sites. The chain is Small ribosomal subunit protein uS13 from Alteromonas mediterranea (strain DSM 17117 / CIP 110805 / LMG 28347 / Deep ecotype).